Here is an 86-residue protein sequence, read N- to C-terminus: Small ribosomal subunit protein uS15 (86 aa).

The interval 1–22 (MSVDTQKVIEDNKRSAQDTGSP) is disordered. Residues 7–16 (KVIEDNKRSA) are compositionally biased toward basic and acidic residues.

Belongs to the universal ribosomal protein uS15 family. As to quaternary structure, part of the 30S ribosomal subunit. Forms a bridge to the 50S subunit in the 70S ribosome, contacting the 23S rRNA.

In terms of biological role, one of the primary rRNA binding proteins, it binds directly to 16S rRNA where it helps nucleate assembly of the platform of the 30S subunit by binding and bridging several RNA helices of the 16S rRNA. Functionally, forms an intersubunit bridge (bridge B4) with the 23S rRNA of the 50S subunit in the ribosome. In Xanthomonas axonopodis pv. citri (strain 306), this protein is Small ribosomal subunit protein uS15.